We begin with the raw amino-acid sequence, 561 residues long: Potassium-transporting ATPase potassium-binding subunit (561 aa).

A run of 12 helical transmembrane segments spans residues G2 to L22, I66 to F86, A135 to I155, I177 to T197, L253 to F273, A280 to G300, F327 to V347, L354 to G374, G378 to G398, I413 to I433, L482 to L502, and A531 to I551.

The protein belongs to the KdpA family. In terms of assembly, the system is composed of three essential subunits: KdpA, KdpB and KdpC.

It localises to the cell inner membrane. Functionally, part of the high-affinity ATP-driven potassium transport (or Kdp) system, which catalyzes the hydrolysis of ATP coupled with the electrogenic transport of potassium into the cytoplasm. This subunit binds the periplasmic potassium ions and delivers the ions to the membrane domain of KdpB through an intramembrane tunnel. This chain is Potassium-transporting ATPase potassium-binding subunit, found in Nostoc sp. (strain PCC 7120 / SAG 25.82 / UTEX 2576).